Consider the following 442-residue polypeptide: Putative protein YjbI (442 aa).

The chain is Putative protein YjbI (yjbI) from Escherichia coli (strain K12).